A 1416-amino-acid polypeptide reads, in one-letter code: DNA-directed RNA polymerase subunit beta' (1416 aa).

Residues Cys71, Cys73, Cys86, and Cys89 each coordinate Zn(2+). Residues Asp461, Asp463, and Asp465 each coordinate Mg(2+). Zn(2+) contacts are provided by Cys815, Cys889, Cys896, and Cys899.

Belongs to the RNA polymerase beta' chain family. In terms of assembly, the RNAP catalytic core consists of 2 alpha, 1 beta, 1 beta' and 1 omega subunit. When a sigma factor is associated with the core the holoenzyme is formed, which can initiate transcription. Requires Mg(2+) as cofactor. Zn(2+) is required as a cofactor.

The catalysed reaction is RNA(n) + a ribonucleoside 5'-triphosphate = RNA(n+1) + diphosphate. DNA-dependent RNA polymerase catalyzes the transcription of DNA into RNA using the four ribonucleoside triphosphates as substrates. This Haemophilus influenzae (strain PittEE) protein is DNA-directed RNA polymerase subunit beta'.